Reading from the N-terminus, the 596-residue chain is Meiosis-specific protein ASY1 (596 aa).

One can recognise an HORMA domain in the interval Gln15–Val228. A disordered region spans residues Cys235–Gln303. The span at Gln282–Thr295 shows a compositional bias: acidic residues. An SWIRM domain is found at Ser351–Arg449. The segment at Thr562–Asn596 is disordered.

As to quaternary structure, interacts with ASY3.

Its subcellular location is the chromosome. The protein resides in the nucleus. Required for normal meiosis in male and female gametophytes. Plays a crucial role in coordinating the activity of DMC1, a key member of the homologous recombination machinery. Acts at the interface between the developing chromosome axes and the recombination machinery to ensure DMC1-mediated interhomolog recombination. In Arabidopsis thaliana (Mouse-ear cress), this protein is Meiosis-specific protein ASY1.